Reading from the N-terminus, the 140-residue chain is Class I hydrophobin B (140 aa).

The first 16 residues, 1–16 (MKFLAVVSLLAATALA), serve as a signal peptide directing secretion. Disulfide bonds link C42/C113, C50/C107, C51/C88, and C114/C133. A glycan (N-linked (GlcNAc...) asparagine) is linked at N117.

The protein belongs to the fungal hydrophobin family. Self-assembles to form functional amyloid fibrils called rodlets. Self-assembly into fibrillar rodlets occurs spontaneously at hydrophobic:hydrophilic interfaces and the rodlets further associate laterally to form amphipathic monolayers.

The protein resides in the secreted. It is found in the spore wall. Its function is as follows. Aerial growth, conidiation, and dispersal of filamentous fungi in the environment rely upon a capability of their secreting small amphipathic proteins called hydrophobins (HPBs) with low sequence identity. Class I can self-assemble into an outermost layer of rodlet bundles on aerial cell surfaces, conferring cellular hydrophobicity that supports fungal growth, development and dispersal; whereas Class II form highly ordered films at water-air interfaces through intermolecular interactions but contribute nothing to the rodlet structure. RodB is a class I hydrophobin that, unlike rodA, is not required for rodlet formation. The protein is Class I hydrophobin B of Aspergillus fumigatus (strain ATCC MYA-4609 / CBS 101355 / FGSC A1100 / Af293) (Neosartorya fumigata).